The primary structure comprises 246 residues: Probable transcriptional regulatory protein WP1214 (246 aa).

The segment at 1-22 is disordered; sequence MAGHSQFSNIKHRKGAQDAKRS.

It belongs to the TACO1 family.

It localises to the cytoplasm. The chain is Probable transcriptional regulatory protein WP1214 from Wolbachia pipientis subsp. Culex pipiens (strain wPip).